Consider the following 335-residue polypeptide: Ketol-acid reductoisomerase (NADP(+)) (335 aa).

Positions Ser-5–Thr-185 constitute a KARI N-terminal Rossmann domain. NADP(+) contacts are provided by residues Tyr-28 to Gln-31, Ser-56, and Asp-86 to Gln-89. His-111 is a catalytic residue. Position 137 (Gly-137) interacts with NADP(+). Residues Thr-186–Gly-331 enclose the KARI C-terminal knotted domain. 4 residues coordinate Mg(2+): Asp-194, Glu-198, Glu-230, and Glu-234. A substrate-binding site is contributed by Ser-255.

The protein belongs to the ketol-acid reductoisomerase family. Mg(2+) is required as a cofactor.

The catalysed reaction is (2R)-2,3-dihydroxy-3-methylbutanoate + NADP(+) = (2S)-2-acetolactate + NADPH + H(+). The enzyme catalyses (2R,3R)-2,3-dihydroxy-3-methylpentanoate + NADP(+) = (S)-2-ethyl-2-hydroxy-3-oxobutanoate + NADPH + H(+). It participates in amino-acid biosynthesis; L-isoleucine biosynthesis; L-isoleucine from 2-oxobutanoate: step 2/4. The protein operates within amino-acid biosynthesis; L-valine biosynthesis; L-valine from pyruvate: step 2/4. Its function is as follows. Involved in the biosynthesis of branched-chain amino acids (BCAA). Catalyzes an alkyl-migration followed by a ketol-acid reduction of (S)-2-acetolactate (S2AL) to yield (R)-2,3-dihydroxy-isovalerate. In the isomerase reaction, S2AL is rearranged via a Mg-dependent methyl migration to produce 3-hydroxy-3-methyl-2-ketobutyrate (HMKB). In the reductase reaction, this 2-ketoacid undergoes a metal-dependent reduction by NADPH to yield (R)-2,3-dihydroxy-isovalerate. The polypeptide is Ketol-acid reductoisomerase (NADP(+)) (Saccharolobus solfataricus (strain ATCC 35092 / DSM 1617 / JCM 11322 / P2) (Sulfolobus solfataricus)).